Consider the following 207-residue polypeptide: Octanoyltransferase (207 aa).

One can recognise a BPL/LPL catalytic domain in the interval 27–203 (ADTEDELWVV…HLETQFTPKA (177 aa)). Residues 66 to 73 (RGGQITYH), 133 to 135 (SLG), and 146 to 148 (GLA) contribute to the substrate site. Cys-164 acts as the Acyl-thioester intermediate in catalysis.

The protein belongs to the LipB family.

It is found in the cytoplasm. The catalysed reaction is octanoyl-[ACP] + L-lysyl-[protein] = N(6)-octanoyl-L-lysyl-[protein] + holo-[ACP] + H(+). It functions in the pathway protein modification; protein lipoylation via endogenous pathway; protein N(6)-(lipoyl)lysine from octanoyl-[acyl-carrier-protein]: step 1/2. Its function is as follows. Catalyzes the transfer of endogenously produced octanoic acid from octanoyl-acyl-carrier-protein onto the lipoyl domains of lipoate-dependent enzymes. Lipoyl-ACP can also act as a substrate although octanoyl-ACP is likely to be the physiological substrate. The sequence is that of Octanoyltransferase from Neisseria meningitidis serogroup A / serotype 4A (strain DSM 15465 / Z2491).